We begin with the raw amino-acid sequence, 381 residues long: Succinyl-diaminopimelate desuccinylase (381 aa).

A Zn(2+)-binding site is contributed by histidine 71. The active site involves aspartate 73. Residue aspartate 104 coordinates Zn(2+). The Proton acceptor role is filled by glutamate 136. The Zn(2+) site is built by glutamate 137, glutamate 166, and histidine 351.

This sequence belongs to the peptidase M20A family. DapE subfamily. Homodimer. The cofactor is Zn(2+). Requires Co(2+) as cofactor.

The catalysed reaction is N-succinyl-(2S,6S)-2,6-diaminopimelate + H2O = (2S,6S)-2,6-diaminopimelate + succinate. The protein operates within amino-acid biosynthesis; L-lysine biosynthesis via DAP pathway; LL-2,6-diaminopimelate from (S)-tetrahydrodipicolinate (succinylase route): step 3/3. Its function is as follows. Catalyzes the hydrolysis of N-succinyl-L,L-diaminopimelic acid (SDAP), forming succinate and LL-2,6-diaminopimelate (DAP), an intermediate involved in the bacterial biosynthesis of lysine and meso-diaminopimelic acid, an essential component of bacterial cell walls. The polypeptide is Succinyl-diaminopimelate desuccinylase (Ehrlichia chaffeensis (strain ATCC CRL-10679 / Arkansas)).